The following is a 779-amino-acid chain: Phosphoribosylformylglycinamidine synthase subunit PurL (779 aa).

H52 is a catalytic residue. 2 residues coordinate ATP: Y55 and K94. E96 is a Mg(2+) binding site. Substrate is bound by residues 97-100 and R119; that span reads SHNH. H98 functions as the Proton acceptor in the catalytic mechanism. D120 provides a ligand contact to Mg(2+). Q243 lines the substrate pocket. D271 lines the Mg(2+) pocket. 315 to 317 provides a ligand contact to substrate; the sequence is ESQ. Residues N523 and G560 each contribute to the ATP site. N561 provides a ligand contact to Mg(2+). Substrate is bound at residue S563.

It belongs to the FGAMS family. As to quaternary structure, monomer. Part of the FGAM synthase complex composed of 1 PurL, 1 PurQ and 2 PurS subunits.

It is found in the cytoplasm. The catalysed reaction is N(2)-formyl-N(1)-(5-phospho-beta-D-ribosyl)glycinamide + L-glutamine + ATP + H2O = 2-formamido-N(1)-(5-O-phospho-beta-D-ribosyl)acetamidine + L-glutamate + ADP + phosphate + H(+). The protein operates within purine metabolism; IMP biosynthesis via de novo pathway; 5-amino-1-(5-phospho-D-ribosyl)imidazole from N(2)-formyl-N(1)-(5-phospho-D-ribosyl)glycinamide: step 1/2. Functionally, part of the phosphoribosylformylglycinamidine synthase complex involved in the purines biosynthetic pathway. Catalyzes the ATP-dependent conversion of formylglycinamide ribonucleotide (FGAR) and glutamine to yield formylglycinamidine ribonucleotide (FGAM) and glutamate. The FGAM synthase complex is composed of three subunits. PurQ produces an ammonia molecule by converting glutamine to glutamate. PurL transfers the ammonia molecule to FGAR to form FGAM in an ATP-dependent manner. PurS interacts with PurQ and PurL and is thought to assist in the transfer of the ammonia molecule from PurQ to PurL. This is Phosphoribosylformylglycinamidine synthase subunit PurL from Prochlorococcus marinus (strain MIT 9515).